We begin with the raw amino-acid sequence, 428 residues long: Glucose-1-phosphate adenylyltransferase (428 aa).

Residues Y114, G179, 194-195, and S212 contribute to the alpha-D-glucose 1-phosphate site; that span reads EK.

The protein belongs to the bacterial/plant glucose-1-phosphate adenylyltransferase family. Homotetramer.

It catalyses the reaction alpha-D-glucose 1-phosphate + ATP + H(+) = ADP-alpha-D-glucose + diphosphate. The protein operates within glycan biosynthesis; glycogen biosynthesis. In terms of biological role, involved in the biosynthesis of ADP-glucose, a building block required for the elongation reactions to produce glycogen. Catalyzes the reaction between ATP and alpha-D-glucose 1-phosphate (G1P) to produce pyrophosphate and ADP-Glc. The sequence is that of Glucose-1-phosphate adenylyltransferase from Yersinia pseudotuberculosis serotype O:1b (strain IP 31758).